A 711-amino-acid chain; its full sequence is Polyribonucleotide nucleotidyltransferase (711 aa).

Mg(2+) is bound by residues Asp486 and Asp492. Positions Pro553 to Ile612 constitute a KH domain. The S1 motif domain maps to Gly622–Lys690. Positions Ile689–Glu711 are disordered. Residues Glu694–Glu711 show a composition bias toward low complexity.

The protein belongs to the polyribonucleotide nucleotidyltransferase family. As to quaternary structure, component of the RNA degradosome, which is a multiprotein complex involved in RNA processing and mRNA degradation. Mg(2+) is required as a cofactor.

Its subcellular location is the cytoplasm. It catalyses the reaction RNA(n+1) + phosphate = RNA(n) + a ribonucleoside 5'-diphosphate. Functionally, involved in mRNA degradation. Catalyzes the phosphorolysis of single-stranded polyribonucleotides processively in the 3'- to 5'-direction. This Escherichia coli (strain ATCC 8739 / DSM 1576 / NBRC 3972 / NCIMB 8545 / WDCM 00012 / Crooks) protein is Polyribonucleotide nucleotidyltransferase.